Here is a 169-residue protein sequence, read N- to C-terminus: Phosphopantetheine adenylyltransferase (169 aa).

Thr-14 is a binding site for substrate. ATP is bound by residues 14-15 and His-22; that span reads TF. The substrate site is built by Lys-46, Leu-78, and Arg-92. Residues 93–95, Glu-103, and 128–134 contribute to the ATP site; these read GLR and HSFISSS.

It belongs to the bacterial CoaD family. Homohexamer. The cofactor is Mg(2+).

The protein resides in the cytoplasm. It carries out the reaction (R)-4'-phosphopantetheine + ATP + H(+) = 3'-dephospho-CoA + diphosphate. The protein operates within cofactor biosynthesis; coenzyme A biosynthesis; CoA from (R)-pantothenate: step 4/5. Reversibly transfers an adenylyl group from ATP to 4'-phosphopantetheine, yielding dephospho-CoA (dPCoA) and pyrophosphate. The sequence is that of Phosphopantetheine adenylyltransferase from Stenotrophomonas maltophilia (strain R551-3).